The sequence spans 149 residues: Calmodulin (149 aa).

4 EF-hand domains span residues 8–43 (EQIA…LGQN), 44–79 (PTEA…KMKD), 81–116 (DSEE…LGEK), and 117–149 (LTDE…MMSK). Ca(2+) is bound by residues aspartate 21, aspartate 23, aspartate 25, threonine 27, glutamate 32, aspartate 57, aspartate 59, asparagine 61, threonine 63, glutamate 68, aspartate 94, aspartate 96, asparagine 98, glutamate 105, aspartate 130, aspartate 132, aspartate 134, glutamine 136, and glutamate 141.

This sequence belongs to the calmodulin family.

In terms of biological role, calmodulin mediates the control of a large number of enzymes, ion channels and other proteins by Ca(2+). Among the enzymes to be stimulated by the calmodulin-Ca(2+) complex are a number of protein kinases and phosphatases. The sequence is that of Calmodulin from Globisporangium splendens (Leaf rot fungus).